The following is a 208-amino-acid chain: MKLVQVQHPLVKHKLGLMRSAEINTKKFRELATEVGSLLTYEATADLETEKVIIDGWCGPVEIDQIKGKKVTVVPILRAGLGMMDGVLEHVPSARISVVGMYRDEETLEPVPYFQKLASDLEERLAIVVDPMLATGGSMIATIDLLKAKGCKHIKVLVLVAAPEGIKALEAAHPDIELYTASVDSHLNEQGYIIPGLGDAGDKIFGTK.

5-phospho-alpha-D-ribose 1-diphosphate is bound by residues Arg-78, Arg-103, and 130-138 (DPMLATGGS). Residues Ile-193 and 198–200 (GDA) each bind uracil. Asp-199 contributes to the 5-phospho-alpha-D-ribose 1-diphosphate binding site.

It belongs to the UPRTase family. Requires Mg(2+) as cofactor.

The catalysed reaction is UMP + diphosphate = 5-phospho-alpha-D-ribose 1-diphosphate + uracil. Its pathway is pyrimidine metabolism; UMP biosynthesis via salvage pathway; UMP from uracil: step 1/1. Allosterically activated by GTP. Functionally, catalyzes the conversion of uracil and 5-phospho-alpha-D-ribose 1-diphosphate (PRPP) to UMP and diphosphate. The sequence is that of Uracil phosphoribosyltransferase from Pasteurella multocida (strain Pm70).